The chain runs to 307 residues: GTPase Era (307 aa).

The region spanning 7–181 is the Era-type G domain; it reads RCGWVALMGP…VELIRKKLPK (175 aa). The segment at 15 to 22 is G1; the sequence is GPPNAGKS. 15–22 serves as a coordination point for GTP; that stretch reads GPPNAGKS. The G2 stretch occupies residues 41–45; it reads QTTRN. Residues 62–65 are G3; sequence DTPG. GTP-binding positions include 62–66 and 130–133; these read DTPGL and NKVD. The interval 130–133 is G4; that stretch reads NKVD. The segment at 160–162 is G5; that stretch reads ISA. Residues 212-290 form the KH type-2 domain; sequence LRQEVPYSVA…HLELWVKVRE (79 aa).

Belongs to the TRAFAC class TrmE-Era-EngA-EngB-Septin-like GTPase superfamily. Era GTPase family. In terms of assembly, monomer.

The protein resides in the cytoplasm. The protein localises to the cell inner membrane. Functionally, an essential GTPase that binds both GDP and GTP, with rapid nucleotide exchange. Plays a role in 16S rRNA processing and 30S ribosomal subunit biogenesis and possibly also in cell cycle regulation and energy metabolism. In Desulfovibrio desulfuricans (strain ATCC 27774 / DSM 6949 / MB), this protein is GTPase Era.